Consider the following 161-residue polypeptide: Nucleotide-binding protein Lferr_1091 (161 aa).

The protein belongs to the YajQ family.

Functionally, nucleotide-binding protein. The protein is Nucleotide-binding protein Lferr_1091 of Acidithiobacillus ferrooxidans (strain ATCC 53993 / BNL-5-31) (Leptospirillum ferrooxidans (ATCC 53993)).